A 594-amino-acid polypeptide reads, in one-letter code: Putative aldehyde oxidase Art an 7 (594 aa).

The signal sequence occupies residues 1-23 (MASSIKTVILFLLPLLLAYSVLA). Residues 28–56 (TDGGDKPGPEIDDGGGDKPVPGNNDGASD) form a disordered region.

In terms of processing, the N-terminus is blocked. Glycosylated. Expressed in pollen (at protein level).

Its subcellular location is the cytoplasm. It carries out the reaction an aldehyde + O2 + H2O = a carboxylate + H2O2 + H(+). Functionally, catalyzes the oxidation of aldehydes to the corresponding carboxylate by coupling the reaction to the reduction of dioxygen to hydrogen peroxide. Substrates include glyoxal and other aldehydes. Does not have enzymatic activity on D-galactose. The polypeptide is Putative aldehyde oxidase Art an 7 (Artemisia annua (Sweet wormwood)).